We begin with the raw amino-acid sequence, 34 residues long: MSDIN-like toxin proprotein 4 (34 aa).

The propeptide occupies 1–10 (MSDINTARLP). The segment at residues 11-20 (LFLPPVRMPP) is a cross-link (cyclopeptide (Leu-Pro)). Positions 21–34 (CVGDDIEMVLTRGE) are excised as a propeptide.

Belongs to the MSDIN fungal toxin family. In terms of processing, processed by the macrocyclase-peptidase enzyme POPB to yield a toxic cyclic decapeptide. POPB first removes 10 residues from the N-terminus. Conformational trapping of the remaining peptide forces the enzyme to release this intermediate rather than proceed to macrocyclization. The enzyme rebinds the remaining peptide in a different conformation and catalyzes macrocyclization of the N-terminal 10 residues.

Functionally, probable toxin that belongs to the MSDIN-like toxin family responsible for a large number of food poisoning cases and deaths. This is MSDIN-like toxin proprotein 4 from Amanita bisporigera (Destroying angel).